We begin with the raw amino-acid sequence, 200 residues long: dITP/XTP pyrophosphatase (200 aa).

Threonine 8–lysine 13 serves as a coordination point for substrate. The Proton acceptor role is filled by aspartate 69. Aspartate 69 contacts Mg(2+). Substrate-binding positions include serine 70, phenylalanine 154–aspartate 157, lysine 177, and histidine 182–arginine 183.

It belongs to the HAM1 NTPase family. In terms of assembly, homodimer. Mg(2+) serves as cofactor.

The catalysed reaction is XTP + H2O = XMP + diphosphate + H(+). It carries out the reaction dITP + H2O = dIMP + diphosphate + H(+). The enzyme catalyses ITP + H2O = IMP + diphosphate + H(+). In terms of biological role, pyrophosphatase that catalyzes the hydrolysis of nucleoside triphosphates to their monophosphate derivatives, with a high preference for the non-canonical purine nucleotides XTP (xanthosine triphosphate), dITP (deoxyinosine triphosphate) and ITP. Seems to function as a house-cleaning enzyme that removes non-canonical purine nucleotides from the nucleotide pool, thus preventing their incorporation into DNA/RNA and avoiding chromosomal lesions. In Vibrio vulnificus (strain CMCP6), this protein is dITP/XTP pyrophosphatase.